Consider the following 95-residue polypeptide: UPF0223 protein Bsph_1378 (95 aa).

The protein belongs to the UPF0223 family.

The polypeptide is UPF0223 protein Bsph_1378 (Lysinibacillus sphaericus (strain C3-41)).